Here is a 436-residue protein sequence, read N- to C-terminus: Enolase (436 aa).

Gln167 contributes to the (2R)-2-phosphoglycerate binding site. The active-site Proton donor is Glu209. Residues Asp246, Glu291, and Asp318 each contribute to the Mg(2+) site. Positions 343, 372, 373, and 394 each coordinate (2R)-2-phosphoglycerate. Residue Lys343 is the Proton acceptor of the active site.

It belongs to the enolase family. In terms of assembly, component of the RNA degradosome, a multiprotein complex involved in RNA processing and mRNA degradation. It depends on Mg(2+) as a cofactor.

The protein localises to the cytoplasm. The protein resides in the secreted. It localises to the cell surface. The enzyme catalyses (2R)-2-phosphoglycerate = phosphoenolpyruvate + H2O. It participates in carbohydrate degradation; glycolysis; pyruvate from D-glyceraldehyde 3-phosphate: step 4/5. Catalyzes the reversible conversion of 2-phosphoglycerate (2-PG) into phosphoenolpyruvate (PEP). It is essential for the degradation of carbohydrates via glycolysis. This is Enolase from Actinobacillus pleuropneumoniae serotype 3 (strain JL03).